Reading from the N-terminus, the 100-residue chain is Transcription and mRNA export factor SUS1 (100 aa).

It belongs to the ENY2 family. Component of the nuclear pore complex (NPC)-associated TREX-2 complex (transcription and export complex 2), composed of at least SUS1, SAC3, THP1, SEM1, and CDC31. TREX-2 contains 2 SUS1 chains. The TREX-2 complex interacts with the nucleoporin NUP1. Component of the 1.8 MDa SAGA transcription coactivator-HAT complex. SAGA is built of 5 distinct domains with specialized functions. Within the SAGA complex, SUS1, SGF11, SGF73 and UBP8 form an additional subcomplex of SAGA called the DUB module (deubiquitination module). Interacts directly with THP1, SAC3, SGF11, and with the RNA polymerase II.

Its subcellular location is the nucleus. The protein resides in the nucleoplasm. It is found in the cytoplasm. It localises to the P-body. Functionally, involved in mRNA export coupled transcription activation by association with both the TREX-2 and the SAGA complexes. At the promoters, SAGA is required for recruitment of the basal transcription machinery. It influences RNA polymerase II transcriptional activity through different activities such as TBP interaction and promoter selectivity, interaction with transcription activators, and chromatin modification through histone acetylation and deubiquitination. Within the SAGA complex, participates in a subcomplex required for deubiquitination of H2B and for the maintenance of steady-state H3 methylation levels. The TREX-2 complex functions in docking export-competent ribonucleoprotein particles (mRNPs) to the nuclear entrance of the nuclear pore complex (nuclear basket). TREX-2 participates in mRNA export and accurate chromatin positioning in the nucleus by tethering genes to the nuclear periphery. May also be involved in cytoplasmic mRNA decay by interaction with components of P-bodies. The protein is Transcription and mRNA export factor SUS1 of Candida glabrata (strain ATCC 2001 / BCRC 20586 / JCM 3761 / NBRC 0622 / NRRL Y-65 / CBS 138) (Yeast).